The primary structure comprises 277 residues: MEMO1 family protein Tpet_0837 (277 aa).

It belongs to the MEMO1 family.

The polypeptide is MEMO1 family protein Tpet_0837 (Thermotoga petrophila (strain ATCC BAA-488 / DSM 13995 / JCM 10881 / RKU-1)).